The chain runs to 323 residues: uncharacterized protein (323 aa).

The signal sequence occupies residues 1–45 (MLATLSQIRAWSTEHLIDAAGYWTETADRWEDVFLQMRNQAHAIA). The interval 186–227 (FKQDGPTPPPPGAPHPSGGADGPYSDPITSMMLPPAGTEAPV) is disordered. 2 consecutive transmembrane segments (helical) span residues 269-289 (SAEWTAAVAGFAGSSAGVVGT) and 290-310 (ALAIPAGPADWALLGAALLGV).

Its subcellular location is the cell membrane. This is an uncharacterized protein from Mycobacterium tuberculosis (strain CDC 1551 / Oshkosh).